The chain runs to 238 residues: uncharacterized protein (238 aa).

Residues 1–20 (MNNVKLLIAGSAFFAMSAQA) form the signal peptide.

It to E.coli GltF.

This is an uncharacterized protein from Escherichia coli (strain K12).